The chain runs to 210 residues: Putative biopolymer transport protein ExbB-like 3 (210 aa).

A run of 3 helical transmembrane segments spans residues 2–22 (AGGI…ALII), 104–124 (LFQT…ILGL), and 152–172 (LVST…ANVF).

It belongs to the ExbB/TolQ family.

The protein localises to the cell inner membrane. Functionally, involved in the TonB-dependent energy-dependent transport of various receptor-bound substrates. Protects ExbD from proteolytic degradation and functionally stabilizes TonB. This is Putative biopolymer transport protein ExbB-like 3 from Synechocystis sp. (strain ATCC 27184 / PCC 6803 / Kazusa).